The following is a 397-amino-acid chain: Tryptophan synthase beta chain (397 aa).

N6-(pyridoxal phosphate)lysine is present on K86.

Belongs to the TrpB family. Tetramer of two alpha and two beta chains. Requires pyridoxal 5'-phosphate as cofactor.

The catalysed reaction is (1S,2R)-1-C-(indol-3-yl)glycerol 3-phosphate + L-serine = D-glyceraldehyde 3-phosphate + L-tryptophan + H2O. Its pathway is amino-acid biosynthesis; L-tryptophan biosynthesis; L-tryptophan from chorismate: step 5/5. In terms of biological role, the beta subunit is responsible for the synthesis of L-tryptophan from indole and L-serine. In Tolumonas auensis (strain DSM 9187 / NBRC 110442 / TA 4), this protein is Tryptophan synthase beta chain.